The following is a 418-amino-acid chain: Putative F-box protein At1g20795 (418 aa).

The 46-residue stretch at 1–46 (METLGLPLPLFEKILFRLDPISLVMMKCTRRSFNSHISEDPYFKSK) folds into the F-box domain.

This is Putative F-box protein At1g20795 from Arabidopsis thaliana (Mouse-ear cress).